The primary structure comprises 194 residues: Segregation and condensation protein B (194 aa).

The protein belongs to the ScpB family. As to quaternary structure, homodimer. Homodimerization may be required to stabilize the binding of ScpA to the Smc head domains. Component of a cohesin-like complex composed of ScpA, ScpB and the Smc homodimer, in which ScpA and ScpB bind to the head domain of Smc. The presence of the three proteins is required for the association of the complex with DNA.

The protein resides in the cytoplasm. Functionally, participates in chromosomal partition during cell division. May act via the formation of a condensin-like complex containing Smc and ScpA that pull DNA away from mid-cell into both cell halves. The sequence is that of Segregation and condensation protein B from Brevibacillus brevis (strain 47 / JCM 6285 / NBRC 100599).